A 324-amino-acid polypeptide reads, in one-letter code: Olfactory receptor 2T2 (324 aa).

Residues 1–26 are Extracellular-facing; that stretch reads MGMEGLLQNSTNFVLTGLITHPAFPG. Residue Asn-9 is glycosylated (N-linked (GlcNAc...) asparagine). The helical transmembrane segment at 27-50 threads the bilayer; it reads LLFAIVFSIFVVAITANLVMILLI. At 51–58 the chain is on the cytoplasmic side; that stretch reads HMDSRLHT. The chain crosses the membrane as a helical span at residues 59-80; the sequence is PMYFLLSQLSIMDTIYICITVP. The Extracellular segment spans residues 81–101; the sequence is KMLQDLLSKDKTISFLGCAVQ. Cys-98 and Cys-190 are oxidised to a cystine. Residues 102-121 traverse the membrane as a helical segment; sequence IFLYLTLIGGEFFLLGLMAY. Residues 122-140 are Cytoplasmic-facing; it reads DRYVAVCNPLRYPLLMNRR. Residues 141-159 form a helical membrane-spanning segment; that stretch reads VCLFMVVGSWVGGSLDGFM. The Extracellular portion of the chain corresponds to 160 to 196; sequence LTPVTMSFPFCRSREINHFFCEIPAVLKLSCTDTSLY. Residues 197 to 220 form a helical membrane-spanning segment; the sequence is ETLMYACCVLMLLIPLSVISVSYT. Topologically, residues 221 to 237 are cytoplasmic; sequence HILLTVHRMNSAEGRRK. A helical transmembrane segment spans residues 238–260; that stretch reads AFATCSSHIMVVSVFYGAAFYTN. Topologically, residues 261–273 are extracellular; the sequence is VLPHSYHTPEKDK. Residues 274–293 traverse the membrane as a helical segment; that stretch reads VVSAFYTILTPMLNPLIYSL. Residues 294–324 lie on the Cytoplasmic side of the membrane; that stretch reads RNKDVAAALRKVLGRCGSSQSIRVATVIRKG.

This sequence belongs to the G-protein coupled receptor 1 family.

The protein localises to the cell membrane. Functionally, odorant receptor. The chain is Olfactory receptor 2T2 (OR2T2) from Homo sapiens (Human).